Reading from the N-terminus, the 416-residue chain is Glutamyl-tRNA reductase (416 aa).

Substrate is bound by residues 49-52 (TCNR), Ser-105, 110-112 (EPQ), and Gln-116. Cys-50 functions as the Nucleophile in the catalytic mechanism. Position 185–190 (185–190 (GAGETI)) interacts with NADP(+).

This sequence belongs to the glutamyl-tRNA reductase family. As to quaternary structure, homodimer.

The catalysed reaction is (S)-4-amino-5-oxopentanoate + tRNA(Glu) + NADP(+) = L-glutamyl-tRNA(Glu) + NADPH + H(+). It functions in the pathway porphyrin-containing compound metabolism; protoporphyrin-IX biosynthesis; 5-aminolevulinate from L-glutamyl-tRNA(Glu): step 1/2. Catalyzes the NADPH-dependent reduction of glutamyl-tRNA(Glu) to glutamate 1-semialdehyde (GSA). This Shewanella amazonensis (strain ATCC BAA-1098 / SB2B) protein is Glutamyl-tRNA reductase.